A 197-amino-acid chain; its full sequence is MVNKDIVWHEASITKREYHEKNQHKSSIIWLTGLSGSGKSTIANAAARELFAQGYQVTVLDGDNVRHGLNKDLGFSDEDRKENIRRIGEVAKLFVEQGTIVITAFISPFKEDRGLVRQLVEEDEFHEVYVKCDLATCEERDPKGLYKKARNGEIPFFTGIDSPYEEPETPELVLDTGAHNREECKNQLVQYVKDQTK.

ATP is bound at residue 33-40; sequence GLSGSGKS. Catalysis depends on serine 107, which acts as the Phosphoserine intermediate.

The protein belongs to the APS kinase family.

The catalysed reaction is adenosine 5'-phosphosulfate + ATP = 3'-phosphoadenylyl sulfate + ADP + H(+). Its pathway is sulfur metabolism; hydrogen sulfide biosynthesis; sulfite from sulfate: step 2/3. Its function is as follows. Catalyzes the synthesis of activated sulfate. In Bacillus licheniformis (strain ATCC 14580 / DSM 13 / JCM 2505 / CCUG 7422 / NBRC 12200 / NCIMB 9375 / NCTC 10341 / NRRL NRS-1264 / Gibson 46), this protein is Adenylyl-sulfate kinase.